The chain runs to 397 residues: UPF0761 membrane protein Kkor_1635 (397 aa).

Helical transmembrane passes span 36 to 56 (MLAL…FPSF), 92 to 112 (NLSA…MRSI), 132 to 152 (ILAY…SLAA), 168 to 188 (ILTF…LYMV), 201 to 221 (IAAV…AIFV), and 237 to 257 (IPIF…GVIV).

This sequence belongs to the UPF0761 family.

The protein resides in the cell inner membrane. In Kangiella koreensis (strain DSM 16069 / JCM 12317 / KCTC 12182 / SW-125), this protein is UPF0761 membrane protein Kkor_1635.